We begin with the raw amino-acid sequence, 264 residues long: Thymidylate synthase (264 aa).

Residue R21 participates in dUMP binding. Position 51 (H51) interacts with (6R)-5,10-methylene-5,6,7,8-tetrahydrofolate. R126 to R127 is a dUMP binding site. The active-site Nucleophile is C146. Residues R166 to D169, N177, and H207 to Y209 contribute to the dUMP site. D169 serves as a coordination point for (6R)-5,10-methylene-5,6,7,8-tetrahydrofolate. A263 contacts (6R)-5,10-methylene-5,6,7,8-tetrahydrofolate.

This sequence belongs to the thymidylate synthase family. Bacterial-type ThyA subfamily. As to quaternary structure, homodimer.

It localises to the cytoplasm. It catalyses the reaction dUMP + (6R)-5,10-methylene-5,6,7,8-tetrahydrofolate = 7,8-dihydrofolate + dTMP. It functions in the pathway pyrimidine metabolism; dTTP biosynthesis. Its function is as follows. Catalyzes the reductive methylation of 2'-deoxyuridine-5'-monophosphate (dUMP) to 2'-deoxythymidine-5'-monophosphate (dTMP) while utilizing 5,10-methylenetetrahydrofolate (mTHF) as the methyl donor and reductant in the reaction, yielding dihydrofolate (DHF) as a by-product. This enzymatic reaction provides an intracellular de novo source of dTMP, an essential precursor for DNA biosynthesis. The protein is Thymidylate synthase of Bartonella bacilliformis (strain ATCC 35685 / KC583 / Herrer 020/F12,63).